The following is a 302-amino-acid chain: UDP-N-acetylenolpyruvoylglucosamine reductase (302 aa).

One can recognise an FAD-binding PCMH-type domain in the interval 31-210 (IGGQTKVYFR…ENEVLELKKK (180 aa)). The active site involves R175. S224 acts as the Proton donor in catalysis. E297 is an active-site residue.

This sequence belongs to the MurB family. FAD serves as cofactor.

The protein localises to the cytoplasm. The catalysed reaction is UDP-N-acetyl-alpha-D-muramate + NADP(+) = UDP-N-acetyl-3-O-(1-carboxyvinyl)-alpha-D-glucosamine + NADPH + H(+). It participates in cell wall biogenesis; peptidoglycan biosynthesis. In terms of biological role, cell wall formation. The chain is UDP-N-acetylenolpyruvoylglucosamine reductase from Pelagibacter ubique (strain HTCC1062).